We begin with the raw amino-acid sequence, 348 residues long: Chloroacetanilide N-alkylformylase, oxygenase component (348 aa).

Residues 7-108 (WYAVAWCDEV…ARERHKLIWA (102 aa)) enclose the Rieske domain. The [2Fe-2S] cluster site is built by C47, H49, C66, and H69. Residues H159 and H164 each coordinate Fe cation. Position 250 (H250) interacts with substrate. D293 serves as a coordination point for Fe cation.

In terms of assembly, the chloroacetanilide N-alkylformylase multicomponent enzyme system is composed of an oxygenase component (CndA) and an electron transfer component formed by a ferredoxin reductase (CndC1) and a ferredoxin (CndB1). In vitro, chloroacetanilide N-alkylformylase assays in which CndB1 is substituted for CndB2 demonstrate that the two enzymes possess nearly identical activities. It depends on [2Fe-2S] cluster as a cofactor.

It catalyses the reaction butachlor + 2 reduced [2Fe-2S]-[ferredoxin] + O2 + 2 H(+) = butyl formate + N-(2,6-diethylphenyl)-2-chloroacetamide + 2 oxidized [2Fe-2S]-[ferredoxin] + H2O. It carries out the reaction alachlor + 2 reduced [2Fe-2S]-[ferredoxin] + O2 + 2 H(+) = methyl formate + N-(2,6-diethylphenyl)-2-chloroacetamide + 2 oxidized [2Fe-2S]-[ferredoxin] + H2O. The catalysed reaction is acetochlor + 2 reduced [2Fe-2S]-[ferredoxin] + O2 + 2 H(+) = N-(2-ethyl-6-methylphenyl)-2-chloroacetamide + ethyl formate + 2 oxidized [2Fe-2S]-[ferredoxin] + H2O. Activity enhanced by Fe(2+) and Mg(2+) ions. Divalent cations such as Ca(2+), Cr(2+), Co(2+), and Mn(2+) show moderate inhibition of the enzyme, whereas heavy metal ions such as Ag(+), Cu(2+), Pb(2+), Hg(2+), Ni(2+) and Zn(2+) severely inhibit the activity. Functionally, component of the chloroacetanilide N-alkylformylase multicomponent enzyme system involved in the degradation of chloroacetanilide herbicides (N-alkoxyalkyl-N-chloroacetyl-substituted aniline derivatives). In vitro, catalyzes the N-dealkylation of butachlor, alachlor and acetochlor to yield 2-chloro-N-(2,6-diethylphenyl)acetamide (CDEPA) (for alachlor and butachlor) and 2-chloro-N-(2-methyl-6-ethylphenyl)acetamide (CMEPA) (for acetochlor). The chain is Chloroacetanilide N-alkylformylase, oxygenase component from Rhizorhabdus wittichii (strain DC-6 / KACC 16600) (Sphingomonas wittichii).